Here is a 93-residue protein sequence, read N- to C-terminus: MDPVKAQQLAAELEVEMMADMYNSLLRMTGACHKKCVPPHYKEAELSKGESVCLDRCVSKYLDIHERMGKKLTELSLQDEELMKKMQQGVTST.

The Twin CX3C motif motif lies at Cys32–Cys57. 2 cysteine pairs are disulfide-bonded: Cys32-Cys57 and Cys36-Cys53.

This sequence belongs to the small Tim family. Heterohexamer; composed of 3 copies of TIMM9 and 3 copies of TIMM10/TIM10A, named soluble 70 kDa complex. The complex forms a 6-bladed alpha-propeller structure and associates with the TIMM22 component of the TIM22 complex. Interacts with multi-pass transmembrane proteins in transit.

It is found in the mitochondrion inner membrane. Functionally, mitochondrial intermembrane chaperone that participates in the import and insertion of multi-pass transmembrane proteins into the mitochondrial inner membrane. May also be required for the transfer of beta-barrel precursors from the TOM complex to the sorting and assembly machinery (SAM complex) of the outer membrane. Acts as a chaperone-like protein that protects the hydrophobic precursors from aggregation and guide them through the mitochondrial intermembrane space. This Xenopus laevis (African clawed frog) protein is Mitochondrial import inner membrane translocase subunit Tim10-A (timm10-a).